Consider the following 368-residue polypeptide: uncharacterized protein (368 aa).

The segment at 237-287 is disordered; that stretch reads ESLSIPSRRRPSSIAPIGTRPSRKEIAFSNSSTPTDQTLRPPNPPAANGNA. Over residues 238 to 253 the composition is skewed to low complexity; that stretch reads SLSIPSRRRPSSIAPI. The span at 264-276 shows a compositional bias: polar residues; that stretch reads FSNSSTPTDQTLR.

This is an uncharacterized protein from Schizosaccharomyces pombe (strain 972 / ATCC 24843) (Fission yeast).